The following is a 242-amino-acid chain: UPF0073 membrane protein Rv1085c (242 aa).

Transmembrane regions (helical) follow at residues 42-62 (VYSA…SWAV), 67-87 (AGLT…VSAT), 108-128 (SMIF…ALPA), 133-153 (VVLS…MCWP), 159-179 (VGVP…ATIL), 186-206 (ALVL…LYAV), and 222-242 (FHAC…FVVF).

Belongs to the UPF0073 (Hly-III) family.

It localises to the cell membrane. The protein is UPF0073 membrane protein Rv1085c of Mycobacterium tuberculosis (strain ATCC 25618 / H37Rv).